We begin with the raw amino-acid sequence, 298 residues long: Thymidylate synthase (298 aa).

DUMP is bound by residues Arg25 and 159–160; that span reads RR. The active-site Nucleophile is Cys179. DUMP-binding positions include 200-203, Asn211, and 241-243; these read RSCD and HLY. Asp203 contacts (6R)-5,10-methylene-5,6,7,8-tetrahydrofolate. Ala297 serves as a coordination point for (6R)-5,10-methylene-5,6,7,8-tetrahydrofolate.

The protein belongs to the thymidylate synthase family. Bacterial-type ThyA subfamily. In terms of assembly, homodimer.

Its subcellular location is the cytoplasm. The catalysed reaction is dUMP + (6R)-5,10-methylene-5,6,7,8-tetrahydrofolate = 7,8-dihydrofolate + dTMP. Its pathway is pyrimidine metabolism; dTTP biosynthesis. In terms of biological role, catalyzes the reductive methylation of 2'-deoxyuridine-5'-monophosphate (dUMP) to 2'-deoxythymidine-5'-monophosphate (dTMP) while utilizing 5,10-methylenetetrahydrofolate (mTHF) as the methyl donor and reductant in the reaction, yielding dihydrofolate (DHF) as a by-product. This enzymatic reaction provides an intracellular de novo source of dTMP, an essential precursor for DNA biosynthesis. This is Thymidylate synthase from Rhodopseudomonas palustris (strain BisA53).